Reading from the N-terminus, the 215-residue chain is Large ribosomal subunit protein uL4 (215 aa).

A disordered region spans residues 43 to 100; that stretch reads AAKRQGTHSTKTRGEVSGGGKKPYRQKGSGRARQGSTRAPQFTGGGTVHGPKPRDYSQ.

It belongs to the universal ribosomal protein uL4 family. Part of the 50S ribosomal subunit.

One of the primary rRNA binding proteins, this protein initially binds near the 5'-end of the 23S rRNA. It is important during the early stages of 50S assembly. It makes multiple contacts with different domains of the 23S rRNA in the assembled 50S subunit and ribosome. In terms of biological role, forms part of the polypeptide exit tunnel. The protein is Large ribosomal subunit protein uL4 of Mycolicibacterium smegmatis (Mycobacterium smegmatis).